Consider the following 49-residue polypeptide: Chitin-binding lectin (49 aa).

The region spanning 2–45 is the Chitin-binding type-1 domain; that stretch reads DHRCGREATPPGKLCNDGRCCSQWGWCGTTQAYCSGKCQSQCDC. 4 disulfides stabilise this stretch: cysteine 5-cysteine 22, cysteine 16-cysteine 28, cysteine 21-cysteine 35, and cysteine 39-cysteine 43.

In terms of assembly, homodimer; disulfide-linked.

In terms of biological role, chitin-binding lectin which is specific for N-acetylglucosamine oligomers. This Viscum album (European mistletoe) protein is Chitin-binding lectin.